A 198-amino-acid chain; its full sequence is Copy number protein (198 aa).

The protein resides in the cell membrane. Functionally, involved in copy number control of pIP404. This basic and hydrophobic protein may exert its effect from the cytoplasmic membrane. This chain is Copy number protein (cop), found in Clostridium perfringens.